The following is a 222-amino-acid chain: Sororin-like protein (222 aa).

A disordered region spans residues 1 to 189 (MEAPRSVGGR…VKQEKEDPVS (189 aa)). The segment covering 24 to 33 (SRSSQQSSSS) has biased composition (low complexity). Positions 47-60 (RLVEQTTLKEKPKD) are enriched in basic and acidic residues. The segment covering 88-105 (ADLASPASAPSRPQTSRS) has biased composition (low complexity). Residues 155–162 (GKKTRQAS) carry the Nuclear localization signal motif. Positions 167–179 (KTLKVAPKKRQRT) are enriched in basic residues. The C-terminal Sororin domain stretch occupies residues 192 to 214 (CQDYIEKQKAYFAEIDAFELPVE).

This sequence belongs to the sororin family.

Its subcellular location is the nucleus. Its function is as follows. Regulator of sister chromatid cohesion in mitosis stabilizing cohesin complex association with chromatin. Antagonizes the action of WAPL proteins (WAPL1 and WAPL2) which stimulates cohesin dissociation from chromatin, particularly during somatic division in root cells and meiocytes during anaphase I. Required for centromeric sister chromatid cohesion during male meiosis (microsporogenesis). Cohesion ensures that chromosome partitioning is accurate in dividing cells and may play an important role in DNA repair. In Arabidopsis thaliana (Mouse-ear cress), this protein is Sororin-like protein.